Consider the following 149-residue polypeptide: Calmodulin-2 (149 aa).

The residue at position 2 (A2) is an N-acetylalanine. EF-hand domains are found at residues 8–43 (EQIAEFKEAFSLFDKDGDGCITTKELGTVMRSLGQN), 44–79 (PTEAELQDMINEVDADGNGTIDFPEFLNLMAKKMKD), 81–116 (DSEEELKEAFRVFDKDQNGFISAAELRHVMTNLGEK), and 117–149 (LTDEEVDEMIREADVDGDGQINYEEFVKVMMAK). Ca(2+) contacts are provided by D21, D23, D25, C27, E32, D57, D59, N61, T63, E68, D94, D96, N98, and E105. K116 is subject to N6,N6,N6-trimethyllysine. Ca(2+) contacts are provided by D130, D132, D134, Q136, and E141.

Belongs to the calmodulin family.

Calmodulin mediates the control of a large number of enzymes, ion channels and other proteins by Ca(2+). Among the enzymes to be stimulated by the calmodulin-Ca(2+) complex are a number of protein kinases and phosphatases. The polypeptide is Calmodulin-2 (CAM2) (Oryza sativa subsp. indica (Rice)).